The following is a 348-amino-acid chain: Phosphatidylinositol 3,4,5-trisphosphate 3-phosphatase ptn1 (348 aa).

In terms of domain architecture, Phosphatase tensin-type spans 18-189 (EKVNRSFAYL…YYIEILKQFP (172 aa)). Catalysis depends on Cys-129, which acts as the Phosphocysteine intermediate.

It is found in the cytoplasmic vesicle. The catalysed reaction is a 1,2-diacyl-sn-glycero-3-phospho-(1D-myo-inositol-3,4,5-trisphosphate) + H2O = a 1,2-diacyl-sn-glycero-3-phospho-(1D-myo-inositol-4,5-bisphosphate) + phosphate. It carries out the reaction 1,2-dioctanoyl-sn-glycero-3-phospho-(1D-myo-inositol-3,4,5-trisphosphate) + H2O = 1,2-dioctanoyl-sn-glycero-3-phospho-(1D-myo-inositol-4,5-bisphosphate) + phosphate. It catalyses the reaction 1,2-dihexadecanoyl-sn-glycero-3-phospho-(1D-myo-inositol-3,4,5-trisphosphate) + H2O = 1,2-dihexadecanoyl-sn-glycero-3-phospho-(1D-myo-inositol-4,5-bisphosphate) + phosphate. Its function is as follows. Acts as a phosphoinositide 3-phosphatase and regulates PtdIns(3,4,5)P3 levels. In Schizosaccharomyces pombe (strain 972 / ATCC 24843) (Fission yeast), this protein is Phosphatidylinositol 3,4,5-trisphosphate 3-phosphatase ptn1 (ptn1).